Reading from the N-terminus, the 691-residue chain is Threonine--tRNA ligase (691 aa).

The interval 1–22 is disordered; it reads MSVPAQPAPGADGGDPRQPIRV. The region spanning 1–73 is the TGS domain; that stretch reads MSVPAQPAPG…DADAEVTPIA (73 aa). A catalytic region spans residues 268 to 574; sequence DHRKLGVELD…LTEHYAGAFP (307 aa). Positions 373, 424, and 551 each coordinate Zn(2+).

The protein belongs to the class-II aminoacyl-tRNA synthetase family. In terms of assembly, homodimer. It depends on Zn(2+) as a cofactor.

The protein localises to the cytoplasm. The enzyme catalyses tRNA(Thr) + L-threonine + ATP = L-threonyl-tRNA(Thr) + AMP + diphosphate + H(+). Its function is as follows. Catalyzes the attachment of threonine to tRNA(Thr) in a two-step reaction: L-threonine is first activated by ATP to form Thr-AMP and then transferred to the acceptor end of tRNA(Thr). Also edits incorrectly charged L-seryl-tRNA(Thr). This is Threonine--tRNA ligase from Mycobacterium marinum (strain ATCC BAA-535 / M).